The following is a 179-amino-acid chain: uncharacterized protein (179 aa).

A disordered region spans residues 1 to 32; sequence MELQGAQEDLGISLSSPRRNHETRPGSKAKGR.

This is an uncharacterized protein from Homo sapiens (Human).